A 466-amino-acid polypeptide reads, in one-letter code: Dynein axonemal assembly factor 11 (466 aa).

4 LRR repeats span residues 22–43 (SLEELSLHQQEIERLEHIDKWC), 45–66 (DLKILYLQNNLIGKIENVSKLK), 67–88 (KLEYLNLALNNIEKIENLEGCE), and 89–110 (ELAKLDLTVNFIGELSSIKNLQ). The region spanning 123-161 (NPCASFDHYREFVVATLPQLKWLDGKEIEPSERIKALQD) is the LRRCT domain. Positions 178 to 204 (LKRAKLKEEAQRKHQEEDKNEDKRSNA) form a coiled coil. A compositionally biased stretch (basic and acidic residues) spans 185-202 (EEAQRKHQEEDKNEDKRS). 3 disordered regions span residues 185–206 (EEAQRKHQEEDKNEDKRSNAGF), 268–288 (MEKQRKKQEKLSEKKKKVKPP), and 391–466 (AFKS…PPLI). Over residues 269-287 (EKQRKKQEKLSEKKKKVKP) the composition is skewed to basic residues. Residues 301-396 (VNEPKIDFSL…GGQRAFKSMK (96 aa)) form the CS domain. Composition is skewed to basic and acidic residues over residues 398–425 (TSDRSREQTNTRSKHMEKLEVDPSKHSF) and 433–445 (QEKKHTPRRRPEP). The segment covering 450 to 460 (SEEDPTFEDNP) has biased composition (acidic residues).

It belongs to the tilB family. Interacts (via CS domain) with ZMYND10 (via C-terminus). Expressed predominantly in testis and in nasal epithelial cells.

It localises to the cytoplasm. The protein localises to the cell projection. It is found in the cilium. Its subcellular location is the dynein axonemal particle. The protein resides in the flagellum. Involved in dynein arm assembly, is important for expression and transporting outer dynein arm (ODA) proteins from the cytoplasm to the cilia. Acts as a crucial component in the formation and motility of spermatozoal flagella. The sequence is that of Dynein axonemal assembly factor 11 from Homo sapiens (Human).